An 88-amino-acid polypeptide reads, in one-letter code: UPF0297 protein BT9727_4120 (88 aa).

The protein belongs to the UPF0297 family.

This chain is UPF0297 protein BT9727_4120, found in Bacillus thuringiensis subsp. konkukian (strain 97-27).